A 386-amino-acid chain; its full sequence is Histidine decarboxylase (386 aa).

Substrate is bound at residue histidine 120. N6-(pyridoxal phosphate)lysine is present on lysine 233.

It belongs to the group II decarboxylase family. In terms of assembly, homotetramer. Pyridoxal 5'-phosphate is required as a cofactor.

It catalyses the reaction L-histidine + H(+) = histamine + CO2. It participates in siderophore biosynthesis; anguibactin biosynthesis. This Vibrio anguillarum (strain ATCC 68554 / 775) (Listonella anguillarum) protein is Histidine decarboxylase.